Consider the following 209-residue polypeptide: Rac-like GTP-binding protein ARAC9 (209 aa).

Position 25–32 (25–32 (GDGAVGKT)) interacts with GTP. Positions 47–55 (YVPTVFDNF) match the Effector region motif. GTP contacts are provided by residues 72–76 (DTAGQ) and 130–133 (TKSD). Cysteine 206 is modified (cysteine methyl ester). Cysteine 206 carries S-geranylgeranyl cysteine lipidation. A propeptide spans 207–209 (HVL) (removed in mature form).

This sequence belongs to the small GTPase superfamily. Rho family. As to quaternary structure, interacts with SPK1.

The protein resides in the cytoplasm. It is found in the membrane. Functionally, inactive GDP-bound Rho GTPases reside in the cytosol, are found in a complex with Rho GDP-dissociation inhibitors (Rho GDIs), and are released from the GDI protein in order to translocate to membranes upon activation. In Arabidopsis thaliana (Mouse-ear cress), this protein is Rac-like GTP-binding protein ARAC9 (ARAC9).